Here is a 215-residue protein sequence, read N- to C-terminus: MSSNIVLTVDVREGTGKGAARAARREDLVPGIVYGGKLDPVSVTLRGNEIRKALLGGHFLSNMIEIDHKGKRQTVIARDIQFHPVSDKAMHIDLYRVDEDTKINVNVAVNFTNEDACPALKRGGVLNIVRHDVELLCPAGSIPESVEADLTGLDIGDSLHISAIKLPKGVVPTITDRDFTVATLQGSRAVLTDAEEETDETPEEPEAIRQKGDEE.

The tract at residues 190-215 (VLTDAEEETDETPEEPEAIRQKGDEE) is disordered. Residues 193–205 (DAEEETDETPEEP) are compositionally biased toward acidic residues. Residues 206 to 215 (EAIRQKGDEE) are compositionally biased toward basic and acidic residues.

Belongs to the bacterial ribosomal protein bL25 family. CTC subfamily. Part of the 50S ribosomal subunit; part of the 5S rRNA/L5/L18/L25 subcomplex. Contacts the 5S rRNA. Binds to the 5S rRNA independently of L5 and L18.

Its function is as follows. This is one of the proteins that binds to the 5S RNA in the ribosome where it forms part of the central protuberance. The polypeptide is Large ribosomal subunit protein bL25 (Maricaulis maris (strain MCS10) (Caulobacter maris)).